The following is a 509-amino-acid chain: MNEQQRLASQQANSSTKKEEKDYSKYFENVYQPPSLKDAKKRGKEEVKIERDFGLPEEFRNFGTGRKFYIRTYGCQMNEHDTEVMAGIFTALGYEPTFSTEDADVVLLNTCAIRENAENKVFGELGHLKSLKRRNPDLLIGVCGCMSQEESVVNKIMQKNQHVDMVFGTHNIHRLPYILKDAMFSKETVVEVWSKEGDVIENLPKVRRGDIKAWVNIMYGCDKFCTYCIVPYTRGKERSRRPEDIIQEIRHLAANGYKEITLLGQNVNAYGKDFEDIEYGLGDLMDELRKVDIARIRFTTSHPRDFDDHLIEVLGKGGNLVEHIHLPVQSGSTDMLKIMARKYSREHYLELVRKIKEAIPDVVLTTDIIVGFPNETDEQFEETMSLYREVGFDTAFTFIYSPREGTPAAKMKDNVPMEVKKERLQRLNTLVNTLAIEKNSRYKGQIVEVLVDGESKNNPEVLAGYTRTNKLVNFVASKSLIGQLVKVKITEAKTWSLNGELVEEPIEVK.

Over residues 1 to 15 the composition is skewed to polar residues; that stretch reads MNEQQRLASQQANSS. The disordered stretch occupies residues 1 to 25; it reads MNEQQRLASQQANSSTKKEEKDYSK. Residues 16-25 are compositionally biased toward basic and acidic residues; that stretch reads TKKEEKDYSK. Residues 66–184 form the MTTase N-terminal domain; it reads RKFYIRTYGC…LPYILKDAMF (119 aa). [4Fe-4S] cluster is bound by residues cysteine 75, cysteine 111, cysteine 145, cysteine 221, cysteine 225, and cysteine 228. One can recognise a Radical SAM core domain in the interval 207 to 437; sequence RRGDIKAWVN…NTLVNTLAIE (231 aa). One can recognise a TRAM domain in the interval 440 to 503; sequence SRYKGQIVEV…TWSLNGELVE (64 aa).

The protein belongs to the methylthiotransferase family. MiaB subfamily. As to quaternary structure, monomer. [4Fe-4S] cluster is required as a cofactor.

It is found in the cytoplasm. It carries out the reaction N(6)-dimethylallyladenosine(37) in tRNA + (sulfur carrier)-SH + AH2 + 2 S-adenosyl-L-methionine = 2-methylsulfanyl-N(6)-dimethylallyladenosine(37) in tRNA + (sulfur carrier)-H + 5'-deoxyadenosine + L-methionine + A + S-adenosyl-L-homocysteine + 2 H(+). Catalyzes the methylthiolation of N6-(dimethylallyl)adenosine (i(6)A), leading to the formation of 2-methylthio-N6-(dimethylallyl)adenosine (ms(2)i(6)A) at position 37 in tRNAs that read codons beginning with uridine. This chain is tRNA-2-methylthio-N(6)-dimethylallyladenosine synthase, found in Bacillus cereus (strain B4264).